The following is a 117-amino-acid chain: Large ribosomal subunit protein uL18 (117 aa).

This sequence belongs to the universal ribosomal protein uL18 family. Part of the 50S ribosomal subunit; part of the 5S rRNA/L5/L18/L25 subcomplex. Contacts the 5S and 23S rRNAs.

This is one of the proteins that bind and probably mediate the attachment of the 5S RNA into the large ribosomal subunit, where it forms part of the central protuberance. In Aliivibrio salmonicida (strain LFI1238) (Vibrio salmonicida (strain LFI1238)), this protein is Large ribosomal subunit protein uL18.